A 269-amino-acid polypeptide reads, in one-letter code: MSVGIFDSGLGGLTVLDAVQTRLPDMPFAYLADSAHAPYGVRTADDIYDLTCQSVARLFDAGCNLVILACNTASAAALRRMQESWVPEDKRVLGVFVPLIEAMTERQWGDNSPPREVGVKHVALFATPATVASRAFQRELAFRAIGVDVEAQACGGVVDAIEDGDMMLAEALVRSHVEALQRKMPTPDAAILGCTHYPLMQDIFQKALGENVRVFSQANLVADSLADYLERHPGMRGTGSPVFLTTGDPARVSDRATQFLRRRIEFSAA.

Residues 7–8 (DS) and 39–40 (YG) contribute to the substrate site. The active-site Proton donor/acceptor is the Cys70. Residue 71–72 (NT) coordinates substrate. The active-site Proton donor/acceptor is the Cys194. Position 195–196 (195–196 (TH)) interacts with substrate.

It belongs to the aspartate/glutamate racemases family.

The catalysed reaction is L-glutamate = D-glutamate. Its pathway is cell wall biogenesis; peptidoglycan biosynthesis. In terms of biological role, provides the (R)-glutamate required for cell wall biosynthesis. This chain is Glutamate racemase, found in Roseobacter denitrificans (strain ATCC 33942 / OCh 114) (Erythrobacter sp. (strain OCh 114)).